The following is a 522-amino-acid chain: Nuclear pore glycoprotein p62 (522 aa).

N-acetylserine is present on S2. 5 repeat units span residues 6–7, 44–45, 76–77, 114–115, and 142–143. A 5 X 2 AA repeats of F-G region spans residues 6–143; that stretch reads FGGTGAPTGG…GTAPTGFVFG (138 aa). The segment covering 169 to 179 has biased composition (polar residues); it reads SGFNIGSAGNS. Disordered stretches follow at residues 169–215 and 260–288; these read SGFN…ATIT and APGA…SSTT. Composition is skewed to low complexity over residues 180 to 215 and 262 to 288; these read AQPT…ATIT and GAAS…SSTT. The interval 328–458 is required for centrosome localization; the sequence is MTYAQLESLI…QDLKDIIEHL (131 aa). Residues 328–458 are a coiled coil; that stretch reads MTYAQLESLI…QDLKDIIEHL (131 aa). A glycan (O-linked (GlcNAc) threonine) is linked at T373. Residues S408 and S418 each carry the phosphoserine modification. Residue S468 is glycosylated (O-linked (GlcNAc) serine).

The protein belongs to the nucleoporin NSP1/NUP62 family. In terms of assembly, component of the p62 complex, a complex at least composed of NUP62, NUP54, and NUP58. Interacts with NUP88. Interacts with NUTF2. Interacts with HIKESHI. Interacts with OSBPL8. Interacts with CAPG. Interacts with SAS6 and TUBG1 at the centrosome. Interacts with MCM3AP isoform GANP. (Microbial infection) Interacts with Epstein-barr virus BGLF4; this interaction allows BGLF4 nuclear entry. Post-translationally, O-glycosylated. Contains about 10 N-acetylglucosamine side chain sites predicted for the entire protein, among which only one in the C-terminal. In terms of processing, the inner channel of the NPC has a different redox environment from the cytoplasm and allows the formation of interchain disulfide bonds between some nucleoporins, the significant increase of these linkages upon oxidative stress reduces the permeability of the NPC.

It is found in the nucleus. It localises to the nuclear pore complex. The protein localises to the cytoplasm. Its subcellular location is the cytoskeleton. The protein resides in the spindle pole. It is found in the nucleus envelope. It localises to the microtubule organizing center. The protein localises to the centrosome. In terms of biological role, essential component of the nuclear pore complex. The N-terminal is probably involved in nucleocytoplasmic transport. The C-terminal is involved in protein-protein interaction probably via coiled-coil formation, promotes its association with centrosomes and may function in anchorage of p62 to the pore complex. Plays a role in mitotic cell cycle progression by regulating centrosome segregation, centriole maturation and spindle orientation. It might be involved in protein recruitment to the centrosome after nuclear breakdown. The chain is Nuclear pore glycoprotein p62 (NUP62) from Homo sapiens (Human).